The primary structure comprises 260 residues: 1-(5-phosphoribosyl)-5-[(5-phosphoribosylamino)methylideneamino] imidazole-4-carboxamide isomerase (260 aa).

The Proton acceptor role is filled by D8. The active-site Proton donor is the D130.

Belongs to the HisA/HisF family.

The protein resides in the cytoplasm. The enzyme catalyses 1-(5-phospho-beta-D-ribosyl)-5-[(5-phospho-beta-D-ribosylamino)methylideneamino]imidazole-4-carboxamide = 5-[(5-phospho-1-deoxy-D-ribulos-1-ylimino)methylamino]-1-(5-phospho-beta-D-ribosyl)imidazole-4-carboxamide. Its pathway is amino-acid biosynthesis; L-histidine biosynthesis; L-histidine from 5-phospho-alpha-D-ribose 1-diphosphate: step 4/9. In Chlorobium phaeobacteroides (strain BS1), this protein is 1-(5-phosphoribosyl)-5-[(5-phosphoribosylamino)methylideneamino] imidazole-4-carboxamide isomerase.